The chain runs to 75 residues: Small ribosomal subunit protein bS18 (75 aa).

It belongs to the bacterial ribosomal protein bS18 family. Part of the 30S ribosomal subunit. Forms a tight heterodimer with protein bS6.

In terms of biological role, binds as a heterodimer with protein bS6 to the central domain of the 16S rRNA, where it helps stabilize the platform of the 30S subunit. In Klebsiella pneumoniae (strain 342), this protein is Small ribosomal subunit protein bS18.